An 84-amino-acid chain; its full sequence is UPF0153 protein YeiW (84 aa).

Belongs to the UPF0153 family.

The polypeptide is UPF0153 protein YeiW (yeiW) (Escherichia coli (strain K12)).